Here is a 368-residue protein sequence, read N- to C-terminus: MSAPEKPRERSFPKIEFTDSEAGAKVFPSSKSRSFSYFTPAKLRATMYEDVTVDVQPDPDRHLTQGWIYGFGNGPGGYPKDWTTAKSSNWHAFLDPNEEWNQTIYRNNAAVVRQVELCLKNAKRARVYDGWHTIWLTFIERHVGAWMHAENGLALHVFTSIQRSGPTNMINTAVAVNAAHKMRFAQDLALFNLDLAEATDAFDGSVHRAVWQEAPEWQPTRRVVEELTAVGDWCQLLFATNIVFEQLVGSLFRSELIMQIAARNGDYITPTIVGTGEHDYDRDLNYSRNLFRLLTRDPEHGEANKALFAEWLGIWVPRCLDAARALQPIWSTPADKAVTFASSLKAAKAKFSALLEEIDLDIPEELDK.

The protein belongs to the TmoE/XamoE family. In terms of assembly, the propane 2-monooxygenase multicomponent enzyme system is composed of an electron transfer component and a monooxygenase component interacting with the effector protein MimD. The electron transfer component is composed of a reductase (MimB), and the monooxygenase component is formed by a large subunit (MimA) and a small subunit (MimC). Requires the presence of the chaperonin-like protein MimG to ensure a productive folding, resulting of a soluble MimC, which leads to the active form of MimABCD.

The enzyme catalyses propane + NADH + O2 + H(+) = propan-2-ol + NAD(+) + H2O. It catalyses the reaction acetone + NADH + O2 + H(+) = hydroxyacetone + NAD(+) + H2O. The catalysed reaction is butan-2-one + NADH + O2 + H(+) = 1-hydroxy-2-butanone + NAD(+) + H2O. It carries out the reaction phenol + NADH + O2 + H(+) = hydroquinone + NAD(+) + H2O. Functionally, component of the propane 2-monooxygenase multicomponent enzyme system which is involved in the degradation of propane via the O2-dependent hydroxylation of propane. Also involved in the degradation of acetone via the O2-dependent hydroxylation of acetone. Also able to catalyze the oxidation of phenol, methylethylketone (2-butanone), 1-propanol and 2-propanol. The sequence is that of Propane 2-monooxygenase, hydroxylase component small subunit from Mycolicibacterium goodii (Mycobacterium goodii).